The following is a 554-amino-acid chain: Asparagine synthetase B [glutamine-hydrolyzing] (554 aa).

Cys-2 acts as the For GATase activity in catalysis. Positions 2–186 constitute a Glutamine amidotransferase type-2 domain; sequence CSIFGVFDIK…AGSYLWSQDG (185 aa). L-glutamine contacts are provided by residues 50-54, 75-77, and Asp-99; these read RLSIV and NGE. ATP contacts are provided by residues Leu-233, Val-273, and 347-348; that span reads SG.

The protein belongs to the asparagine synthetase family. In terms of assembly, homodimer.

It catalyses the reaction L-aspartate + L-glutamine + ATP + H2O = L-asparagine + L-glutamate + AMP + diphosphate + H(+). It participates in amino-acid biosynthesis; L-asparagine biosynthesis; L-asparagine from L-aspartate (L-Gln route): step 1/1. With respect to regulation, glutamine-dependent asparagine synthesis activity can be inhibited by aspartic acid analogs (such as a sulfinate derivative and (2S,3R)-2-amino-3-methylsuccinate) in vitro; the inhibition is competitive with respect to aspartate. Catalyzes the ATP-dependent conversion of aspartate into asparagine, using glutamine as a source of nitrogen. Can also use ammonia as the nitrogen source in vitro, albeit with lower efficiency. As nucleotide substrates, ATP and dATP are utilized at a similar rate in both the glutamine- and ammonia-dependent reactions, whereas GTP utilization is only 15% that of ATP, and CTP, UTP, ITP and XTP are very poor or not substrates. Also exhibits glutaminase activity. The sequence is that of Asparagine synthetase B [glutamine-hydrolyzing] (asnB) from Escherichia coli (strain K12).